Here is a 185-residue protein sequence, read N- to C-terminus: MNNETIAKAKRNMNKSIEVYQSNLATVRAGVANASLLDRVMVEYYGVPTPLVQMAGITIPEPRVLMITPYDKSSLNDIEHAILASDLGLTPANDGNVIRLIIPQLTGERRQEIAKEVGKLAEEAKIAVRNVRQEAMKALKKQEKDGEITEDEERRLEKEVQKVTDESTKKIDQMADNKRKEIIQG.

The tract at residues 138-185 (ALKKQEKDGEITEDEERRLEKEVQKVTDESTKKIDQMADNKRKEIIQG) is disordered.

It belongs to the RRF family.

The protein localises to the cytoplasm. Responsible for the release of ribosomes from messenger RNA at the termination of protein biosynthesis. May increase the efficiency of translation by recycling ribosomes from one round of translation to another. This Lactobacillus delbrueckii subsp. bulgaricus (strain ATCC BAA-365 / Lb-18) protein is Ribosome-recycling factor.